Here is a 473-residue protein sequence, read N- to C-terminus: Serine palmitoyltransferase 1 (473 aa).

The Lumenal segment spans residues 1-15 (MATATEQWVLVEMVQ). The tract at residues 1–66 (MATATEQWVL…KEELIEEWQP (66 aa)) is interaction with SPTLC2. A helical transmembrane segment spans residues 16–36 (ALYEAPAYHLILEGILILWII). Residues 37-473 (RLLFSKTYKL…IKEVAQAVLL (437 aa)) are Cytoplasmic-facing. Phosphotyrosine; by ABL is present on Tyr164.

This sequence belongs to the class-II pyridoxal-phosphate-dependent aminotransferase family. As to quaternary structure, component of the serine palmitoyltransferase (SPT) complex, which is also composed of SPTLC2 or SPTLC3 and SPTSSA or SPTSSB. The heterodimer consisting of SPTLC1 and SPTLC2/SPTLC3 forms the catalytic core of the enzyme, while SPTSSA or SPTSSB subunits determine substrate specificity. SPT also interacts with ORMDL proteins, especially ORMDL3, which negatively regulate SPT activity in the presence of ceramides. Forms dimers of heterodimers with SPTLC2. Interacts with RTN4 (isoform B). Pyridoxal 5'-phosphate is required as a cofactor. Post-translationally, phosphorylation at Tyr-164 inhibits activity and promotes cell survival. Widely expressed. Not detected in small intestine.

It is found in the endoplasmic reticulum membrane. It carries out the reaction L-serine + hexadecanoyl-CoA + H(+) = 3-oxosphinganine + CO2 + CoA. The catalysed reaction is octadecanoyl-CoA + L-serine + H(+) = 3-oxoeicosasphinganine + CO2 + CoA. It catalyses the reaction tetradecanoyl-CoA + L-serine + H(+) = 3-oxohexadecasphinganine + CO2 + CoA. The enzyme catalyses dodecanoyl-CoA + L-serine + H(+) = 3-oxotetradecasphinganine + CO2 + CoA. The protein operates within lipid metabolism; sphingolipid metabolism. SPT complex catalytic activity is negatively regulated by ORMDL proteins, including ORMDL3, in the presence of ceramides. This mechanism allows to maintain ceramide levels at sufficient concentrations for the production of complex sphingolipids, but which prevents the accumulation of ceramides to levels that trigger apoptosis. Component of the serine palmitoyltransferase multisubunit enzyme (SPT) that catalyzes the initial and rate-limiting step in sphingolipid biosynthesis by condensing L-serine and activated acyl-CoA (most commonly palmitoyl-CoA) to form long-chain bases. The SPT complex is also composed of SPTLC2 or SPTLC3 and SPTSSA or SPTSSB. Within this complex, the heterodimer with SPTLC2 or SPTLC3 forms the catalytic core. The composition of the serine palmitoyltransferase (SPT) complex determines the substrate preference. The SPTLC1-SPTLC2-SPTSSA complex shows a strong preference for C16-CoA substrate, while the SPTLC1-SPTLC3-SPTSSA isozyme uses both C14-CoA and C16-CoA as substrates, with a slight preference for C14-CoA. The SPTLC1-SPTLC2-SPTSSB complex shows a strong preference for C18-CoA substrate, while the SPTLC1-SPTLC3-SPTSSB isozyme displays an ability to use a broader range of acyl-CoAs, without apparent preference. Required for adipocyte cell viability and metabolic homeostasis. The polypeptide is Serine palmitoyltransferase 1 (SPTLC1) (Homo sapiens (Human)).